A 223-amino-acid polypeptide reads, in one-letter code: MLYRSISCPKGTFFMTTPPAAAEIFGDNLEKAIAYHESLATDGSVRGFIGPREVPRLWDRHILNCGVIGEAMDEGISVADIGSGAGLPGIPLAIARPDLNITLIEPLLKRSVYLNEVKEALNLDNVTVVRGRAEEKVVRKQVGLVDIVTSRAVAPLGKLATWSLPLVKIGGRMVAMKGSSVEEEIERDAKEIRKAGGTDIKVYTVGEALLSEPTTLISIRREK.

S-adenosyl-L-methionine is bound by residues glycine 82, leucine 87, alanine 133–glutamate 134, and arginine 151.

It belongs to the methyltransferase superfamily. RNA methyltransferase RsmG family.

The protein resides in the cytoplasm. Functionally, specifically methylates the N7 position of guanine in position 518 of 16S rRNA. This Corynebacterium glutamicum (strain ATCC 13032 / DSM 20300 / JCM 1318 / BCRC 11384 / CCUG 27702 / LMG 3730 / NBRC 12168 / NCIMB 10025 / NRRL B-2784 / 534) protein is Ribosomal RNA small subunit methyltransferase G.